Consider the following 246-residue polypeptide: UDP-N-acetyl-D-mannosaminuronic acid transferase (246 aa).

The protein belongs to the glycosyltransferase 26 family.

The catalysed reaction is UDP-N-acetyl-alpha-D-mannosaminouronate + N-acetyl-alpha-D-glucosaminyl-di-trans,octa-cis-undecaprenyl diphosphate = beta-D-ManNAcA-(1-&gt;4)-alpha-D-GlcNAc-di-trans,octa-cis-undecaprenyl diphosphate + UDP + H(+). The protein operates within bacterial outer membrane biogenesis; enterobacterial common antigen biosynthesis. Catalyzes the synthesis of Und-PP-GlcNAc-ManNAcA (Lipid II), the second lipid-linked intermediate involved in enterobacterial common antigen (ECA) synthesis. This Shigella flexneri protein is UDP-N-acetyl-D-mannosaminuronic acid transferase.